The sequence spans 475 residues: uncharacterized protein (475 aa).

Residues 185-244 adopt a coiled-coil conformation; the sequence is EISVSAISEQLASLMERVDKLEKMNAALEEENKQLKKEREATIKSVKKEAKKIKQEKPQI.

This is an uncharacterized protein from Nora virus.